A 454-amino-acid chain; its full sequence is UDP-N-acetylmuramoylalanine--D-glutamate ligase (454 aa).

116–122 contributes to the ATP binding site; it reads GTNGKTS.

The protein belongs to the MurCDEF family.

Its subcellular location is the cytoplasm. The enzyme catalyses UDP-N-acetyl-alpha-D-muramoyl-L-alanine + D-glutamate + ATP = UDP-N-acetyl-alpha-D-muramoyl-L-alanyl-D-glutamate + ADP + phosphate + H(+). The protein operates within cell wall biogenesis; peptidoglycan biosynthesis. Its function is as follows. Cell wall formation. Catalyzes the addition of glutamate to the nucleotide precursor UDP-N-acetylmuramoyl-L-alanine (UMA). The sequence is that of UDP-N-acetylmuramoylalanine--D-glutamate ligase from Lachnoclostridium phytofermentans (strain ATCC 700394 / DSM 18823 / ISDg) (Clostridium phytofermentans).